Here is a 478-residue protein sequence, read N- to C-terminus: Probable cytosolic Fe-S cluster assembly factor AAEL012261 (478 aa).

[4Fe-4S] cluster contacts are provided by cysteine 23, cysteine 69, cysteine 72, cysteine 75, cysteine 189, cysteine 245, cysteine 396, and cysteine 400.

It belongs to the NARF family.

Its function is as follows. Component of the cytosolic iron-sulfur (Fe/S) protein assembly machinery. Required for maturation of extramitochondrial Fe/S proteins. This Aedes aegypti (Yellowfever mosquito) protein is Probable cytosolic Fe-S cluster assembly factor AAEL012261.